Reading from the N-terminus, the 238-residue chain is Pyruvate formate-lyase-activating enzyme (238 aa).

Residues 15 to 236 form the Radical SAM core domain; sequence VDGPGIRTVV…KKLEKYLKEL (222 aa). [4Fe-4S] cluster-binding residues include Cys-29, Cys-33, and Cys-36. S-adenosyl-L-methionine-binding positions include 35-37, Gly-78, 126-128, and His-199; these read YCH and DIK.

This sequence belongs to the organic radical-activating enzymes family. [4Fe-4S] cluster is required as a cofactor.

It localises to the cytoplasm. It carries out the reaction glycyl-[formate C-acetyltransferase] + reduced [flavodoxin] + S-adenosyl-L-methionine = glycin-2-yl radical-[formate C-acetyltransferase] + semiquinone [flavodoxin] + 5'-deoxyadenosine + L-methionine + H(+). Functionally, activation of pyruvate formate-lyase under anaerobic conditions by generation of an organic free radical, using S-adenosylmethionine and reduced flavodoxin as cosubstrates to produce 5'-deoxy-adenosine. The chain is Pyruvate formate-lyase-activating enzyme (act) from Clostridium pasteurianum.